A 289-amino-acid polypeptide reads, in one-letter code: Rhodopsin (289 aa).

Residues 1 to 7 (YLVSPAA) lie on the Extracellular side of the membrane. A helical membrane pass occupies residues 8–32 (YAALGAYMFLLILIGFPVNFLTLYV). The Cytoplasmic segment spans residues 33–44 (TLEHKKLRTPLN). A helical transmembrane segment spans residues 45-67 (YILLNLAVADLFMVLGGFTTTMY). The Extracellular segment spans residues 68 to 81 (TSMHGYFVLGRLGC). Residues Cys81 and Cys158 are joined by a disulfide bond. A helical transmembrane segment spans residues 82–104 (NLEGFFATLGGEIALWSLVVLAI). The 'Ionic lock' involved in activated form stabilization signature appears at 105–107 (ERW). At 105–123 (ERWIVVCKPISNFRFTEDN) the chain is on the cytoplasmic side. A helical transmembrane segment spans residues 124–144 (AIMGLAFSWVMALTCAVPPLV). The Extracellular segment spans residues 145 to 173 (GWSRYIPEGMQCSCGVDYYTRAEGFNNES). An N-linked (GlcNAc...) asparagine glycan is attached at Asn171. A helical transmembrane segment spans residues 174 to 195 (FVIYMFIVHFPIPLSVIFFCYG). The Cytoplasmic segment spans residues 196 to 223 (RLLCAVKEAAAAQQESETTQRAEKEVSR). The chain crosses the membrane as a helical span at residues 224 to 245 (MVVILVIGFLVCWLPYASVAWW). At 246–257 (IFCNQGSDFGPI) the chain is on the extracellular side. A helical membrane pass occupies residues 258-279 (FMTLPSFFAKRPAIYNPMIYIC). N6-(retinylidene)lysine is present on Lys267. The Cytoplasmic segment spans residues 280 to 289 (MNKQFRHCMI).

Belongs to the G-protein coupled receptor 1 family. Opsin subfamily. Post-translationally, phosphorylated on some or all of the serine and threonine residues present in the C-terminal region. Contains one covalently linked retinal chromophore.

The protein resides in the membrane. The protein localises to the cell projection. Its subcellular location is the cilium. It is found in the photoreceptor outer segment. Its function is as follows. Photoreceptor required for image-forming vision at low light intensity. While most salt water fish species use retinal as chromophore, most freshwater fish use 3-dehydroretinal, or a mixture of retinal and 3-dehydroretinal. Light-induced isomerization of 11-cis to all-trans retinal triggers a conformational change that activates signaling via G-proteins. Subsequent receptor phosphorylation mediates displacement of the bound G-protein alpha subunit by arrestin and terminates signaling. The sequence is that of Rhodopsin (rho) from Batrachocottus multiradiatus (Baikal sculpin).